The following is a 262-amino-acid chain: Acyl-[acyl-carrier-protein]--UDP-N-acetylglucosamine O-acyltransferase (262 aa).

Belongs to the transferase hexapeptide repeat family. LpxA subfamily. As to quaternary structure, homotrimer.

The protein resides in the cytoplasm. It catalyses the reaction a (3R)-hydroxyacyl-[ACP] + UDP-N-acetyl-alpha-D-glucosamine = a UDP-3-O-[(3R)-3-hydroxyacyl]-N-acetyl-alpha-D-glucosamine + holo-[ACP]. Its pathway is glycolipid biosynthesis; lipid IV(A) biosynthesis; lipid IV(A) from (3R)-3-hydroxytetradecanoyl-[acyl-carrier-protein] and UDP-N-acetyl-alpha-D-glucosamine: step 1/6. Involved in the biosynthesis of lipid A, a phosphorylated glycolipid that anchors the lipopolysaccharide to the outer membrane of the cell. In Salmonella typhi, this protein is Acyl-[acyl-carrier-protein]--UDP-N-acetylglucosamine O-acyltransferase.